The sequence spans 485 residues: UDP-N-acetylmuramate--L-alanine ligase (485 aa).

G129–T135 contributes to the ATP binding site.

The protein belongs to the MurCDEF family.

The protein resides in the cytoplasm. It carries out the reaction UDP-N-acetyl-alpha-D-muramate + L-alanine + ATP = UDP-N-acetyl-alpha-D-muramoyl-L-alanine + ADP + phosphate + H(+). The protein operates within cell wall biogenesis; peptidoglycan biosynthesis. In terms of biological role, cell wall formation. The protein is UDP-N-acetylmuramate--L-alanine ligase of Vibrio campbellii (strain ATCC BAA-1116).